We begin with the raw amino-acid sequence, 398 residues long: MQNYLTPNFAFAPMIPERASGSRVWDTKGREYIDFSGGIAVNALGHCHPALVDALNAQMHKLWHISNIYTTRPAQELAQKLVANSFADKVFFCNSGSEANEAALKLARKYARDRFGGGKSEIVACINSFHGRTLFTVSVGGQPKYSKDYAPLPQGITHVPFNDIAALEAAVGEQTCAVIIEPIQGESGILPATAEYLQTARRLCDRHNALLILDEVQTGMGHTGRLFAYEHYGIVPDILSSAKALGCGFPIGAMLATEKIAAAFQPGTHGSTFGGNPMACAVGSRAFDIINTPETLNHVREQGQKLQTALLDLCRKTGLFSQVRGMGLLLGCVLDEAYRGRASEITAAALKHGVMILVAGADVLRFAPSLLLNDEDMAEGLRRLEHALTEFAATSDNP.

Phe-129 serves as a coordination point for pyridoxal 5'-phosphate. Arg-132 contributes to the N(2)-acetyl-L-ornithine binding site. Residue 214-217 participates in pyridoxal 5'-phosphate binding; sequence DEVQ. Lys-243 is modified (N6-(pyridoxal phosphate)lysine). A N(2)-acetyl-L-ornithine-binding site is contributed by Ser-271. Thr-272 contributes to the pyridoxal 5'-phosphate binding site.

This sequence belongs to the class-III pyridoxal-phosphate-dependent aminotransferase family. ArgD subfamily. As to quaternary structure, homodimer. Requires pyridoxal 5'-phosphate as cofactor.

The protein resides in the cytoplasm. The catalysed reaction is N(2)-acetyl-L-ornithine + 2-oxoglutarate = N-acetyl-L-glutamate 5-semialdehyde + L-glutamate. It functions in the pathway amino-acid biosynthesis; L-arginine biosynthesis; N(2)-acetyl-L-ornithine from L-glutamate: step 4/4. In Neisseria meningitidis serogroup B (strain ATCC BAA-335 / MC58), this protein is Acetylornithine aminotransferase.